The primary structure comprises 785 residues: Probable cationic amino acid transporter (785 aa).

15 helical membrane-spanning segments follow: residues 58–78 (LVSLGVGSCVGTGMYVVSGLV), 83–103 (AGPGVIVSFIIAAVASILSGV), 119–141 (AYTYSYVTVGEFVAFFIGWNLIL), 187–207 (YPDILALVIGILVTVIVALGV), 216–236 (VLNVINLVVWVFIMIAGLFFV), 251–271 (WSGVMQGAATCFYAFIGFDII), 291–311 (ASLVTCLTAYVSVSVILTLMV), 337–357 (IVAIGSIAGLTVSLLGSLFPM), 360–380 (VIYAMAGDGLLFRFLAHVSTY), 384–404 (PAVACVVSGFLSALLALLVSL), 407–427 (LIEMMSIGTLLAYTLVSVCVL), 568–588 (CVVLLFILIFCFCSLIIFGSG), 596–616 (WAVLLLVVLLLVLTLLVFIII), 628–648 (MAPCVPFVPASAMLVNVYLML), and 655–675 (WIRFGVWCFVGVLIYFGYGMW). Residues 715 to 785 (DQGPFQNWGK…VDDDLDDPLE (71 aa)) are disordered. Residues 727 to 740 (QQKQPQQEQSEPQS) show a composition bias toward low complexity. Residues 775–785 (VVDDDLDDPLE) show a composition bias toward acidic residues.

This sequence belongs to the amino acid-polyamine-organocation (APC) superfamily.

It is found in the lysosome membrane. May be involved in arginine transport. This is Probable cationic amino acid transporter (slc7a14a) from Danio rerio (Zebrafish).